The chain runs to 316 residues: ATP synthase gamma chain (316 aa).

Belongs to the ATPase gamma chain family. As to quaternary structure, F-type ATPases have 2 components, CF(1) - the catalytic core - and CF(0) - the membrane proton channel. CF(1) has five subunits: alpha(3), beta(3), gamma(1), delta(1), epsilon(1). CF(0) has three main subunits: a, b and c.

It is found in the cellular thylakoid membrane. Produces ATP from ADP in the presence of a proton gradient across the membrane. The gamma chain is believed to be important in regulating ATPase activity and the flow of protons through the CF(0) complex. The chain is ATP synthase gamma chain from Prochlorococcus marinus (strain MIT 9301).